We begin with the raw amino-acid sequence, 603 residues long: Isocitrate dehydrogenase kinase/phosphatase (603 aa).

ATP is bound by residues 327-333 (APGIKGL) and lysine 348. Aspartate 383 is a catalytic residue.

It belongs to the AceK family.

The protein localises to the cytoplasm. It catalyses the reaction L-seryl-[isocitrate dehydrogenase] + ATP = O-phospho-L-seryl-[isocitrate dehydrogenase] + ADP + H(+). In terms of biological role, bifunctional enzyme which can phosphorylate or dephosphorylate isocitrate dehydrogenase (IDH) on a specific serine residue. This is a regulatory mechanism which enables bacteria to bypass the Krebs cycle via the glyoxylate shunt in response to the source of carbon. When bacteria are grown on glucose, IDH is fully active and unphosphorylated, but when grown on acetate or ethanol, the activity of IDH declines drastically concomitant with its phosphorylation. The sequence is that of Isocitrate dehydrogenase kinase/phosphatase from Burkholderia mallei (strain ATCC 23344).